A 393-amino-acid polypeptide reads, in one-letter code: S-adenosylmethionine synthase 2 (393 aa).

Glu9 contacts Mg(2+). His15 contacts ATP. Position 43 (Glu43) interacts with K(+). L-methionine is bound by residues Glu56 and Gln99. ATP contacts are provided by residues 167–169 (DGK), 235–238 (SGRF), Asp246, 252–253 (RM), Ala269, Lys273, and Lys277. Asp246 is an L-methionine binding site. Lys277 is a binding site for L-methionine.

The protein belongs to the AdoMet synthase family. Homotetramer. Mn(2+) is required as a cofactor. It depends on Mg(2+) as a cofactor. The cofactor is Co(2+). Requires K(+) as cofactor.

The protein resides in the cytoplasm. It catalyses the reaction L-methionine + ATP + H2O = S-adenosyl-L-methionine + phosphate + diphosphate. It participates in amino-acid biosynthesis; S-adenosyl-L-methionine biosynthesis; S-adenosyl-L-methionine from L-methionine: step 1/1. In terms of biological role, catalyzes the formation of S-adenosylmethionine from methionine and ATP. The reaction comprises two steps that are both catalyzed by the same enzyme: formation of S-adenosylmethionine (AdoMet) and triphosphate, and subsequent hydrolysis of the triphosphate. This chain is S-adenosylmethionine synthase 2 (SAMS2), found in Daucus carota (Wild carrot).